A 62-amino-acid polypeptide reads, in one-letter code: Large ribosomal subunit protein bL28 (62 aa).

The tract at residues 1 to 28 (MARVCAITGRKARSGNSRSHAMNATKRK) is disordered.

This sequence belongs to the bacterial ribosomal protein bL28 family.

This chain is Large ribosomal subunit protein bL28, found in Bacillus thuringiensis (strain Al Hakam).